The primary structure comprises 172 residues: 3-hydroxydecanoyl-[acyl-carrier-protein] dehydratase (172 aa).

The active site involves histidine 71.

The protein belongs to the thioester dehydratase family. FabA subfamily. As to quaternary structure, homodimer.

The protein localises to the cytoplasm. It carries out the reaction a (3R)-hydroxyacyl-[ACP] = a (2E)-enoyl-[ACP] + H2O. The catalysed reaction is (3R)-hydroxydecanoyl-[ACP] = (2E)-decenoyl-[ACP] + H2O. The enzyme catalyses (2E)-decenoyl-[ACP] = (3Z)-decenoyl-[ACP]. It participates in lipid metabolism; fatty acid biosynthesis. Its function is as follows. Necessary for the introduction of cis unsaturation into fatty acids. Catalyzes the dehydration of (3R)-3-hydroxydecanoyl-ACP to E-(2)-decenoyl-ACP and then its isomerization to Z-(3)-decenoyl-ACP. Can catalyze the dehydratase reaction for beta-hydroxyacyl-ACPs with saturated chain lengths up to 16:0, being most active on intermediate chain length. This chain is 3-hydroxydecanoyl-[acyl-carrier-protein] dehydratase, found in Vibrio parahaemolyticus serotype O3:K6 (strain RIMD 2210633).